Here is a 206-residue protein sequence, read N- to C-terminus: Large ribosomal subunit protein uL4 (206 aa).

Residues Asn47 to Asp94 form a disordered region.

The protein belongs to the universal ribosomal protein uL4 family. Part of the 50S ribosomal subunit.

In terms of biological role, one of the primary rRNA binding proteins, this protein initially binds near the 5'-end of the 23S rRNA. It is important during the early stages of 50S assembly. It makes multiple contacts with different domains of the 23S rRNA in the assembled 50S subunit and ribosome. Forms part of the polypeptide exit tunnel. This chain is Large ribosomal subunit protein uL4, found in Azoarcus sp. (strain BH72).